The chain runs to 327 residues: Lipid phosphate phosphatase 1 (327 aa).

A run of 6 helical transmembrane segments spans residues 51-71 (WIIL…SPFY), 93-113 (IWSV…CFYL), 118-138 (VYDL…TGVI), 187-207 (FPSG…LYLS), 217-237 (GHVA…LVGI), and 244-264 (WHHW…AAFC).

Belongs to the PA-phosphatase related phosphoesterase family. In terms of tissue distribution, strongly expressed in leaves, moderately in roots, weakly in floral hamps and flower buds, and not detected in adult flowers and seedpods.

Its subcellular location is the membrane. PA phosphatase activity inhibited by N-ethylmaleimide with an IC(50) value of 10 mM. Functionally, plays a general role in cellular responses to stress, may be by attenuating the signal produced by phospholipases. Exhibits both diacylglycerol pyrophosphate (DGPP) phosphatase and phosphatidate (PA) phosphatase activities. Substrate preference is diacylglycerol pyrophosphate &gt; phosphatidate. The chain is Lipid phosphate phosphatase 1 (LPP1) from Arabidopsis thaliana (Mouse-ear cress).